Here is a 157-residue protein sequence, read N- to C-terminus: Thiosulfate sulfurtransferase/rhodanese-like domain-containing protein 3 (157 aa).

Residues 52 to 154 enclose the Rhodanese domain; the sequence is NSKDIMLIDV…WVTYEISEEK (103 aa). Lysine 96 is subject to N6-succinyllysine. The active-site Cysteine persulfide intermediate is cysteine 114.

This is Thiosulfate sulfurtransferase/rhodanese-like domain-containing protein 3 (Tstd3) from Mus musculus (Mouse).